Consider the following 202-residue polypeptide: Peroxynitrite isomerase (202 aa).

Residues 21–27 (GEWEGRG) carry the GXWXGXG motif. Heme b is bound at residue His193.

It belongs to the nitrobindin family. Homodimer. The cofactor is heme b.

The enzyme catalyses peroxynitrite = nitrate. It participates in nitrogen metabolism. Heme-binding protein able to scavenge peroxynitrite and to protect free L-tyrosine against peroxynitrite-mediated nitration, by acting as a peroxynitrite isomerase that converts peroxynitrite to nitrate. Therefore, this protein likely plays a role in peroxynitrite sensing and in the detoxification of reactive nitrogen and oxygen species (RNS and ROS, respectively). Is able to bind nitric oxide (NO) in vitro, but may act as a sensor of peroxynitrite levels in vivo. The protein is Peroxynitrite isomerase of Pseudarthrobacter chlorophenolicus (strain ATCC 700700 / DSM 12829 / CIP 107037 / JCM 12360 / KCTC 9906 / NCIMB 13794 / A6) (Arthrobacter chlorophenolicus).